The following is a 407-amino-acid chain: Methylthioribose kinase (407 aa).

ATP is bound by residues asparagine 40, lysine 57, and glutamate 111–leucine 113. Residue aspartate 229 participates in substrate binding. Aspartate 246 to glutamate 248 contacts ATP. Arginine 344 contributes to the substrate binding site.

The protein belongs to the methylthioribose kinase family. Homodimer.

It carries out the reaction 5-(methylsulfanyl)-D-ribose + ATP = 5-(methylsulfanyl)-alpha-D-ribose 1-phosphate + ADP + H(+). The protein operates within amino-acid biosynthesis; L-methionine biosynthesis via salvage pathway; S-methyl-5-thio-alpha-D-ribose 1-phosphate from S-methyl-5'-thioadenosine (hydrolase route): step 2/2. Functionally, catalyzes the phosphorylation of methylthioribose into methylthioribose-1-phosphate. In Yersinia pseudotuberculosis serotype O:3 (strain YPIII), this protein is Methylthioribose kinase.